We begin with the raw amino-acid sequence, 257 residues long: Transmembrane protein 101 (257 aa).

The next 8 helical transmembrane spans lie at 21 to 40 (VLLT…LYAE), 52 to 72 (VPYL…MSFG), 77 to 97 (WFAL…YVGG), 110 to 130 (YSRT…AGEL), 139 to 159 (SLQS…AYSL), 182 to 202 (LFFV…YVTL), 206 to 226 (ILAV…AYWH), and 233 to 253 (FWNQ…AVIL).

Its subcellular location is the membrane. Functionally, may activate NF-kappa-B signaling pathways. The polypeptide is Transmembrane protein 101 (TMEM101) (Bos taurus (Bovine)).